Here is a 233-residue protein sequence, read N- to C-terminus: Delta-actitoxin-Amc1a (233 aa).

Residues 1–18 form the signal peptide; it reads MKRIFIVALLFATCLVNA. 2 consecutive propeptides follow at residues 19–29 and 30–33; these read KPSINDADIKR and EPEP. Proline 39 is modified (hydroxyproline). Disulfide bonds link cysteine 40-cysteine 51 and cysteine 43-cysteine 58. 2 propeptides span residues 61–63 and 64–67; these read RKR and EPEP. Hydroxyproline is present on proline 73. 2 disulfides stabilise this stretch: cysteine 74/cysteine 85 and cysteine 77/cysteine 92. 2 propeptides span residues 95-97 and 98-101; these read RKR and EPEP. Proline 107 carries the post-translational modification Hydroxyproline. 2 disulfide bridges follow: cysteine 108-cysteine 119 and cysteine 111-cysteine 126. 2 propeptides span residues 129–131 and 132–135; these read RKR and EPEP. Position 141 is a hydroxyproline (proline 141). 2 disulfide bridges follow: cysteine 142–cysteine 153 and cysteine 145–cysteine 160. Propeptides lie at residues 163–165 and 166–169; these read RKR and EPEP. At proline 175 the chain carries Hydroxyproline. 2 cysteine pairs are disulfide-bonded: cysteine 176–cysteine 187 and cysteine 179–cysteine 194. 2 propeptides span residues 197–199 and 200–203; these read RKR and EPEP. Proline 209 carries the post-translational modification Hydroxyproline. 2 disulfides stabilise this stretch: cysteine 210-cysteine 221 and cysteine 213-cysteine 228. The propeptide occupies 231–233; the sequence is RKR.

Belongs to the sea anemone BBH family. Post-translationally, each Am I peptide may contain 2 disulfide bonds. The precursor protein seems to be processed in the following sequence: release of the signal peptide and of the propeptide, production of six identical 34-residue peptides by cleavage between Arg and Glu, release of four N-terminal and three C-terminal residues from each peptide and hydroxylation of each Pro in position 6 of the resulting 27-residue peptides.

It localises to the secreted. The protein resides in the nematocyst. Functionally, may inhibit voltage-gated sodium channels (Nav). In Antheopsis maculata (Sea anemone), this protein is Delta-actitoxin-Amc1a.